The primary structure comprises 454 residues: tRNA modification GTPase MnmE (454 aa).

Residues Arg-23, Glu-80, and Lys-120 each coordinate (6S)-5-formyl-5,6,7,8-tetrahydrofolate. One can recognise a TrmE-type G domain in the interval 216-377; it reads GMKVVIAGRP…LRNHLKQSMG (162 aa). Asn-226 serves as a coordination point for K(+). GTP is bound by residues 226–231, 245–251, 270–273, 335–338, and 358–360; these read NAGKSS, TDIAGTT, DTAG, NKAD, and SAR. Ser-230 provides a ligand contact to Mg(2+). Residues Thr-245, Ile-247, and Thr-250 each coordinate K(+). Residue Thr-251 coordinates Mg(2+). A (6S)-5-formyl-5,6,7,8-tetrahydrofolate-binding site is contributed by Lys-454.

It belongs to the TRAFAC class TrmE-Era-EngA-EngB-Septin-like GTPase superfamily. TrmE GTPase family. As to quaternary structure, homodimer. Heterotetramer of two MnmE and two MnmG subunits. Requires K(+) as cofactor.

The protein localises to the cytoplasm. In terms of biological role, exhibits a very high intrinsic GTPase hydrolysis rate. Involved in the addition of a carboxymethylaminomethyl (cmnm) group at the wobble position (U34) of certain tRNAs, forming tRNA-cmnm(5)s(2)U34. The protein is tRNA modification GTPase MnmE of Shigella boydii serotype 18 (strain CDC 3083-94 / BS512).